A 273-amino-acid polypeptide reads, in one-letter code: Large ribosomal subunit protein uL2 (273 aa).

A disordered region spans residues 224-264 (AMNPVDHPHGGGEGRNFGKHPVTPWGIQTKGKKTRKNKRTD). The segment covering 253–264 (KGKKTRKNKRTD) has biased composition (basic residues).

Belongs to the universal ribosomal protein uL2 family. In terms of assembly, part of the 50S ribosomal subunit. Forms a bridge to the 30S subunit in the 70S ribosome.

In terms of biological role, one of the primary rRNA binding proteins. Required for association of the 30S and 50S subunits to form the 70S ribosome, for tRNA binding and peptide bond formation. It has been suggested to have peptidyltransferase activity; this is somewhat controversial. Makes several contacts with the 16S rRNA in the 70S ribosome. The chain is Large ribosomal subunit protein uL2 from Buchnera aphidicola subsp. Acyrthosiphon pisum (strain 5A).